The sequence spans 463 residues: Quinolone resistance protein NorB (463 aa).

14 helical membrane passes run 17-37, 53-73, 86-106, 107-127, 142-162, 165-185, 201-221, 230-250, 273-293, 299-319, 334-354, 357-377, 403-423, and 435-455; these read IGIV…VNVV, IAVS…GGLA, IILN…LLLI, IGRL…LSII, YWSI…GAVA, LGWR…LFLI, FDIK…ILIT, SLLF…FIVL, TASN…NTFV, YSSL…LIMI, PMLI…LTFL, ILYV…LGIY, MASA…YAIV, and IALW…LLLV.

It belongs to the major facilitator superfamily. TCR/Tet family.

Its subcellular location is the cell membrane. In terms of biological role, multidrug efflux pump that acts independently of NorA and is one of the factors that confers resistance against diverse quinolones and chemical compounds. The chain is Quinolone resistance protein NorB (norB) from Staphylococcus aureus (strain MSSA476).